Here is a 161-residue protein sequence, read N- to C-terminus: uncharacterized protein (161 aa).

A signal peptide spans 1–35 (MVMAMGFDTVVAAIMATAIIVAVAYTFLAGSTSIA).

This is an uncharacterized protein from Archaeoglobus fulgidus (strain ATCC 49558 / DSM 4304 / JCM 9628 / NBRC 100126 / VC-16).